The chain runs to 710 residues: Polyribonucleotide nucleotidyltransferase (710 aa).

Residues Asp489 and Asp495 each coordinate Mg(2+). Residues 556–615 form the KH domain; that stretch reads PKIDTIKIDVDKIKVVIGKGGETIDKIIAETGVKIDIDDEGNVSIYSSDQAAIDRTKEII. Positions 625 to 693 constitute an S1 motif domain; the sequence is GEVYHAKVIR…EKGRVDASMK (69 aa). The tract at residues 691–710 is disordered; it reads SMKALIPRPPKPEKKEEKHD. Basic and acidic residues predominate over residues 700–710; sequence PKPEKKEEKHD.

The protein belongs to the polyribonucleotide nucleotidyltransferase family. The cofactor is Mg(2+).

It localises to the cytoplasm. It catalyses the reaction RNA(n+1) + phosphate = RNA(n) + a ribonucleoside 5'-diphosphate. Its function is as follows. Involved in mRNA degradation. Catalyzes the phosphorolysis of single-stranded polyribonucleotides processively in the 3'- to 5'-direction. The chain is Polyribonucleotide nucleotidyltransferase from Streptococcus pyogenes serotype M4 (strain MGAS10750).